Consider the following 329-residue polypeptide: Gut-specific cysteine proteinase (329 aa).

The signal sequence occupies residues 1 to 15 (MKFLILTALCAVTLA). The propeptide at 16–84 (FVPINHQSAV…ATEQEVVLAS (69 aa)) is activation peptide. Cystine bridges form between Cys-98–Cys-127, Cys-110–Cys-155, Cys-146–Cys-204, Cys-147–Cys-151, Cys-183–Cys-208, and Cys-191–Cys-196. Cys-113 is an active-site residue. Catalysis depends on residues His-275 and Asn-295.

The protein belongs to the peptidase C1 family. In terms of tissue distribution, larvae exhibit strong expression in gut cells and weak expression in hypodermal cells. Adults exhibit the reverse: strong expression in hypodermal cells and weaker expression in gut cells.

Its function is as follows. Thiol protease. Has a role as a digestive enzyme. The polypeptide is Gut-specific cysteine proteinase (cpr-1) (Caenorhabditis elegans).